A 40-amino-acid polypeptide reads, in one-letter code: Photosystem II reaction center protein J (40 aa).

The helical transmembrane segment at 8-28 threads the bilayer; it reads IPLWLIGTVTGIIVIGLLGIF.

The protein belongs to the PsbJ family. In terms of assembly, PSII is composed of 1 copy each of membrane proteins PsbA, PsbB, PsbC, PsbD, PsbE, PsbF, PsbH, PsbI, PsbJ, PsbK, PsbL, PsbM, PsbT, PsbX, PsbY, PsbZ, Psb30/Ycf12, at least 3 peripheral proteins of the oxygen-evolving complex and a large number of cofactors. It forms dimeric complexes.

The protein resides in the plastid. Its subcellular location is the chloroplast thylakoid membrane. In terms of biological role, one of the components of the core complex of photosystem II (PSII). PSII is a light-driven water:plastoquinone oxidoreductase that uses light energy to abstract electrons from H(2)O, generating O(2) and a proton gradient subsequently used for ATP formation. It consists of a core antenna complex that captures photons, and an electron transfer chain that converts photonic excitation into a charge separation. The protein is Photosystem II reaction center protein J of Pinus koraiensis (Korean pine).